The following is an 81-amino-acid chain: Photosystem I iron-sulfur center (81 aa).

4Fe-4S ferredoxin-type domains lie at 2–31 (AHSV…MVPR) and 39–68 (IASA…VRVY). The [4Fe-4S] cluster site is built by C11, C14, C17, C21, C48, C51, C54, and C58.

As to quaternary structure, the eukaryotic PSI reaction center is composed of at least 11 subunits. The cofactor is [4Fe-4S] cluster.

The protein resides in the plastid. Its subcellular location is the chloroplast thylakoid membrane. It catalyses the reaction reduced [plastocyanin] + hnu + oxidized [2Fe-2S]-[ferredoxin] = oxidized [plastocyanin] + reduced [2Fe-2S]-[ferredoxin]. Functionally, apoprotein for the two 4Fe-4S centers FA and FB of photosystem I (PSI); essential for photochemical activity. FB is the terminal electron acceptor of PSI, donating electrons to ferredoxin. The C-terminus interacts with PsaA/B/D and helps assemble the protein into the PSI complex. Required for binding of PsaD and PsaE to PSI. PSI is a plastocyanin/cytochrome c6-ferredoxin oxidoreductase, converting photonic excitation into a charge separation, which transfers an electron from the donor P700 chlorophyll pair to the spectroscopically characterized acceptors A0, A1, FX, FA and FB in turn. The sequence is that of Photosystem I iron-sulfur center from Antithamnion sp. (Red alga).